The sequence spans 221 residues: MFIAKSIVIGLLICVLFFFFFVSRFNDKYELQPLLTLGLLNASLTALSDLLAQALDSYKLLKFRNKRDVSLEKYGNTILLPASTSKLDVHRTIRYAAYGLCLTPIQFRWFVALSNVIQTENPFIAIVLRVALDQFIFAPLGIVFFFLFMGITECKSYERLKSYFRKHYWPTLKANYILWPAVQLFNFTFVPLVLQVIFANAVSMVWTAYLSLKNSSPNADV.

Helical transmembrane passes span 2-22 (FIAK…FFFV), 34-54 (LLTL…LAQA), 97-117 (AYGL…SNVI), 131-151 (ALDQ…FMGI), and 177-197 (ILWP…LQVI).

It belongs to the peroxisomal membrane protein PXMP2/4 family.

It is found in the membrane. This is an uncharacterized protein from Schizosaccharomyces pombe (strain 972 / ATCC 24843) (Fission yeast).